A 104-amino-acid chain; its full sequence is ATP synthase subunit c (104 aa).

A run of 2 helical transmembrane segments spans residues 37–57 and 83–103; these read LLGA…QGAV and AGIA…LIFV.

Belongs to the ATPase C chain family. In terms of assembly, F-type ATPases have 2 components, F(1) - the catalytic core - and F(0) - the membrane proton channel. F(1) has five subunits: alpha(3), beta(3), gamma(1), delta(1), epsilon(1). F(0) has three main subunits: a(1), b(2) and c(10-14). The alpha and beta chains form an alternating ring which encloses part of the gamma chain. F(1) is attached to F(0) by a central stalk formed by the gamma and epsilon chains, while a peripheral stalk is formed by the delta and b chains.

It is found in the cell membrane. Functionally, f(1)F(0) ATP synthase produces ATP from ADP in the presence of a proton or sodium gradient. F-type ATPases consist of two structural domains, F(1) containing the extramembraneous catalytic core and F(0) containing the membrane proton channel, linked together by a central stalk and a peripheral stalk. During catalysis, ATP synthesis in the catalytic domain of F(1) is coupled via a rotary mechanism of the central stalk subunits to proton translocation. Key component of the F(0) channel; it plays a direct role in translocation across the membrane. A homomeric c-ring of between 10-14 subunits forms the central stalk rotor element with the F(1) delta and epsilon subunits. The chain is ATP synthase subunit c from Mesoplasma florum (strain ATCC 33453 / NBRC 100688 / NCTC 11704 / L1) (Acholeplasma florum).